We begin with the raw amino-acid sequence, 108 residues long: Small ribosomal subunit protein eS25w (108 aa).

The tract at residues Met-1 to Lys-36 is disordered. Over residues Lys-22–Gly-31 the composition is skewed to basic residues.

The protein belongs to the eukaryotic ribosomal protein eS25 family.

The polypeptide is Small ribosomal subunit protein eS25w (RPS25E) (Arabidopsis thaliana (Mouse-ear cress)).